Here is a 465-residue protein sequence, read N- to C-terminus: VGFKAGVKDYKLNYYTPDYETKDTDILAAFRVTPQPGVPPEEAGAAVAAESSTGTWTAVWTDGLTSLDRYKGRCYHIEPVAGEENQYIAYVAYPLDLFEEGSVTNMFTSIVGNVFGFKALRALRLEDLRIPPAYSKTFQGPPHGIQVERDKLNKYGRPLLGCTIKPKLGLSAKNYGRAVYECLRGGLDFTKDDENVNSQPFMRWRDRFLFCAEALYKAQAETGEIKGHYLNATAGTCEEMIKRAVFARELGVPIVMHDYLTGGFTANTSLAHYCRDNGLLLHIHRAMHAVIDRQKNHGIHFRVLAKALRMSGGDHIHAGTVVGKLEGERDITLGFVDLLRDDFVEKDRSRGIYFTQDWVSLPGVLPVASGGIHVWHMPALTEIFGDDSVLQFGGGTLGHPWGNAPGAVANRVALEACVRARNEGRDLAREGNEIIREAAKWSPELAAACEVWKAIKFEFPAMDTL.

An N6,N6,N6-trimethyllysine modification is found at lysine 4. Substrate is bound by residues asparagine 113 and threonine 163. The Proton acceptor role is filled by lysine 165. Lysine 167 provides a ligand contact to substrate. Positions 191, 193, and 194 each coordinate Mg(2+). Lysine 191 carries the N6-carboxylysine modification. Histidine 284 acts as the Proton acceptor in catalysis. Residues arginine 285, histidine 317, and serine 369 each contribute to the substrate site.

It belongs to the RuBisCO large chain family. Type I subfamily. In terms of assembly, heterohexadecamer of 8 large chains and 8 small chains; disulfide-linked. The disulfide link is formed within the large subunit homodimers. Mg(2+) serves as cofactor. Post-translationally, the disulfide bond which can form in the large chain dimeric partners within the hexadecamer appears to be associated with oxidative stress and protein turnover.

It is found in the plastid. It localises to the chloroplast. It catalyses the reaction 2 (2R)-3-phosphoglycerate + 2 H(+) = D-ribulose 1,5-bisphosphate + CO2 + H2O. The enzyme catalyses D-ribulose 1,5-bisphosphate + O2 = 2-phosphoglycolate + (2R)-3-phosphoglycerate + 2 H(+). Its function is as follows. RuBisCO catalyzes two reactions: the carboxylation of D-ribulose 1,5-bisphosphate, the primary event in carbon dioxide fixation, as well as the oxidative fragmentation of the pentose substrate in the photorespiration process. Both reactions occur simultaneously and in competition at the same active site. This Eucommia ulmoides (Hardy rubber tree) protein is Ribulose bisphosphate carboxylase large chain.